The chain runs to 217 residues: MYTGQSDHRPEGVGVNPGSPNVMEPGGGVANGAAVTPEGHYSHAPSSALQAVKKNINHMSGLSLGLRVSEFVLSVIAFSLMASAEQNGAVYSTFTSYSFVLAINVLVALYAIGQIILSVMPLVSGSAPKKLYLFITFGCDQLSAFLLMAAGAAGASVAMLINRKGVIDDYGSGCIDGKITVFCAHAEASIAFTFLSFFCVMISSYLGVYNLAPYLIL.

The segment covering 1–11 (MYTGQSDHRPE) has biased composition (basic and acidic residues). Positions 1–21 (MYTGQSDHRPEGVGVNPGSPN) are disordered. Residues 1–61 (MYTGQSDHRP…VKKNINHMSG (61 aa)) are Cytoplasmic-facing. The helical transmembrane segment at 62–82 (LSLGLRVSEFVLSVIAFSLMA) threads the bilayer. Residues 83–98 (SAEQNGAVYSTFTSYS) are Extracellular-facing. Residues 99-119 (FVLAINVLVALYAIGQIILSV) form a helical membrane-spanning segment. Over 120 to 141 (MPLVSGSAPKKLYLFITFGCDQ) the chain is Cytoplasmic. A helical membrane pass occupies residues 142-162 (LSAFLLMAAGAAGASVAMLIN). The Extracellular segment spans residues 163-187 (RKGVIDDYGSGCIDGKITVFCAHAE). Residues 188–208 (ASIAFTFLSFFCVMISSYLGV) traverse the membrane as a helical segment. The Cytoplasmic segment spans residues 209 to 217 (YNLAPYLIL).

The protein belongs to the Casparian strip membrane proteins (CASP) family. In terms of assembly, homodimer and heterodimers.

It localises to the cell membrane. This Physcomitrium patens (Spreading-leaved earth moss) protein is CASP-like protein UU4.